Here is a 91-residue protein sequence, read N- to C-terminus: Small ribosomal subunit protein uS15 (91 aa).

Belongs to the universal ribosomal protein uS15 family. As to quaternary structure, part of the 30S ribosomal subunit. Forms a bridge to the 50S subunit in the 70S ribosome, contacting the 23S rRNA.

Functionally, one of the primary rRNA binding proteins, it binds directly to 16S rRNA where it helps nucleate assembly of the platform of the 30S subunit by binding and bridging several RNA helices of the 16S rRNA. Its function is as follows. Forms an intersubunit bridge (bridge B4) with the 23S rRNA of the 50S subunit in the ribosome. This is Small ribosomal subunit protein uS15 from Rickettsia prowazekii (strain Madrid E).